A 439-amino-acid polypeptide reads, in one-letter code: Ribosomal protein uS12 methylthiotransferase RimO (439 aa).

The region spanning 1–117 (MNIGFISLGC…IAGVVNRIAQ (117 aa)) is the MTTase N-terminal domain. Positions 10, 46, 80, 154, 158, and 161 each coordinate [4Fe-4S] cluster. Residues 140–370 (TTPPGSAYLK…LRLQQKITRQ (231 aa)) enclose the Radical SAM core domain. The TRAM domain occupies 373 to 439 (LARINTQEKV…RNYDMIGEYQ (67 aa)).

This sequence belongs to the methylthiotransferase family. RimO subfamily. It depends on [4Fe-4S] cluster as a cofactor.

The protein localises to the cytoplasm. The catalysed reaction is L-aspartate(89)-[ribosomal protein uS12]-hydrogen + (sulfur carrier)-SH + AH2 + 2 S-adenosyl-L-methionine = 3-methylsulfanyl-L-aspartate(89)-[ribosomal protein uS12]-hydrogen + (sulfur carrier)-H + 5'-deoxyadenosine + L-methionine + A + S-adenosyl-L-homocysteine + 2 H(+). In terms of biological role, catalyzes the methylthiolation of an aspartic acid residue of ribosomal protein uS12. The polypeptide is Ribosomal protein uS12 methylthiotransferase RimO (Syntrophomonas wolfei subsp. wolfei (strain DSM 2245B / Goettingen)).